A 175-amino-acid polypeptide reads, in one-letter code: Large ribosomal subunit protein uL15 (175 aa).

Disordered stretches follow at residues 1–65 and 155–175; these read MSTL…LPKF and PESA…QPKA. Over residues 12 to 21 the composition is skewed to basic residues; that stretch reads RSWHRKKRVG. Over residues 22-38 the composition is skewed to gly residues; sequence RGQGSGLGKTAGRGGKG. The segment covering 160–169 has biased composition (low complexity); that stretch reads KAHAGKGVKA.

Belongs to the universal ribosomal protein uL15 family. As to quaternary structure, part of the 50S ribosomal subunit.

Functionally, binds to the 23S rRNA. The protein is Large ribosomal subunit protein uL15 of Myxococcus xanthus (strain DK1622).